Reading from the N-terminus, the 322-residue chain is Major serine/threonine-protein phosphatase PP2A-2 catalytic subunit (322 aa).

Positions 70, 72, 98, and 130 each coordinate Mn(2+). Residue histidine 131 is the Proton donor of the active site. Mn(2+) is bound by residues histidine 180 and histidine 254. Position 322 is a leucine methyl ester (leucine 322).

It belongs to the PPP phosphatase family. PP-2A subfamily. The cofactor is Mn(2+).

The catalysed reaction is O-phospho-L-seryl-[protein] + H2O = L-seryl-[protein] + phosphate. It carries out the reaction O-phospho-L-threonyl-[protein] + H2O = L-threonyl-[protein] + phosphate. In terms of biological role, essential role in cell cycle control. PP2A may be involved in controlling the entry into mitosis, possibly acting as an inhibitor. This is Major serine/threonine-protein phosphatase PP2A-2 catalytic subunit (ppa2) from Schizosaccharomyces pombe (strain 972 / ATCC 24843) (Fission yeast).